The primary structure comprises 128 residues: Large ribosomal subunit protein bL12 (128 aa).

It belongs to the bacterial ribosomal protein bL12 family. As to quaternary structure, homodimer. Part of the ribosomal stalk of the 50S ribosomal subunit. Forms a multimeric L10(L12)X complex, where L10 forms an elongated spine to which 2 to 4 L12 dimers bind in a sequential fashion. Binds GTP-bound translation factors.

In terms of biological role, forms part of the ribosomal stalk which helps the ribosome interact with GTP-bound translation factors. Is thus essential for accurate translation. This Synechocystis sp. (strain ATCC 27184 / PCC 6803 / Kazusa) protein is Large ribosomal subunit protein bL12.